The following is a 293-amino-acid chain: Elongation factor Ts (293 aa).

An involved in Mg(2+) ion dislocation from EF-Tu region spans residues Thr80–Val83.

Belongs to the EF-Ts family.

The protein localises to the cytoplasm. Associates with the EF-Tu.GDP complex and induces the exchange of GDP to GTP. It remains bound to the aminoacyl-tRNA.EF-Tu.GTP complex up to the GTP hydrolysis stage on the ribosome. The protein is Elongation factor Ts of Burkholderia pseudomallei (strain 1106a).